Reading from the N-terminus, the 395-residue chain is F-box only protein 7 (395 aa).

The 52-residue stretch at 19-70 (NHDWSKLCPDILRKIIESLSSLDFYRAKIVCSDWYSVWKTCVKRPLRPWRII) folds into the F-box domain.

The sequence is that of F-box only protein 7 (FBX7) from Arabidopsis thaliana (Mouse-ear cress).